A 347-amino-acid polypeptide reads, in one-letter code: Fructose-1,6-bisphosphatase class 1 (347 aa).

The Mg(2+) site is built by Glu107, Asp128, Leu130, and Asp131. Substrate is bound by residues 131–134 (DGSS), Asn224, Tyr257, and Lys286. A Mg(2+)-binding site is contributed by Glu292.

Belongs to the FBPase class 1 family. Homotetramer. Requires Mg(2+) as cofactor.

The protein resides in the cytoplasm. It carries out the reaction beta-D-fructose 1,6-bisphosphate + H2O = beta-D-fructose 6-phosphate + phosphate. The protein operates within carbohydrate biosynthesis; gluconeogenesis. This chain is Fructose-1,6-bisphosphatase class 1, found in Sorangium cellulosum (strain So ce56) (Polyangium cellulosum (strain So ce56)).